The sequence spans 146 residues: Large ribosomal subunit protein uL15 (146 aa).

Residues 1–65 form a disordered region; sequence MSDIQLNTLK…GQMPLQRRLP (65 aa). Positions 24–34 are enriched in gly residues; the sequence is RGIGSGLGKTA.

This sequence belongs to the universal ribosomal protein uL15 family. In terms of assembly, part of the 50S ribosomal subunit.

Functionally, binds to the 23S rRNA. This is Large ribosomal subunit protein uL15 from Bordetella petrii (strain ATCC BAA-461 / DSM 12804 / CCUG 43448).